The chain runs to 283 residues: Protoheme IX farnesyltransferase (283 aa).

Transmembrane regions (helical) follow at residues I13–L33, G35–L55, I90–V110, L156–L176, M208–A228, W230–F250, and V262–F282.

It belongs to the UbiA prenyltransferase family. Protoheme IX farnesyltransferase subfamily.

The protein resides in the cell inner membrane. The catalysed reaction is heme b + (2E,6E)-farnesyl diphosphate + H2O = Fe(II)-heme o + diphosphate. It functions in the pathway porphyrin-containing compound metabolism; heme O biosynthesis; heme O from protoheme: step 1/1. In terms of biological role, converts heme B (protoheme IX) to heme O by substitution of the vinyl group on carbon 2 of heme B porphyrin ring with a hydroxyethyl farnesyl side group. This chain is Protoheme IX farnesyltransferase, found in Salinibacter ruber (strain DSM 13855 / M31).